The following is a 315-amino-acid chain: uncharacterized protein (315 aa).

At 1–38 the chain is on the cytoplasmic side; that stretch reads MDVLLSLPQPELFKTTVIPFLANRNIIKSEAILSNLHS. The helical transmembrane segment at 39–59 threads the bilayer; it reads IFYVAIFYHIWFLFGKWILFP. Over 60–101 the chain is Lumenal; it reads HLVKWKLDYDQKHNVKKDEKTTSERQAQHYKKKYTSLINQSS. Residues 95 to 302 form the TLC domain; that stretch reads SLINQSSVHL…MVSVAAKVLK (208 aa). Residues 102-122 form a helical membrane-spanning segment; that stretch reads VHLISLLQSIVVLYYSLKFLL. At 123–144 the chain is on the cytoplasmic side; it reads DPKASAEPYQTSHSRVFTENRD. Residues 145-165 traverse the membrane as a helical segment; that stretch reads TQVICIFAIGYFVWDIYISTM. At 166 to 170 the chain is on the lumenal side; sequence YSTFP. A helical transmembrane segment spans residues 171 to 190; that stretch reads FVVHGIISTVVFCIGLKPYI. Over 191–225 the chain is Cytoplasmic; the sequence is QYYAPVFLMFELSNPSLNFRWFGIKFLPQKSKFCS. The chain crosses the membrane as a helical span at residues 226 to 246; it reads LLLLLNNLTLMVVFFAARIAW. Residues 247 to 264 are Lumenal-facing; it reads GWFQIGKLCYDFYQVRNE. Residues 265–285 form a helical membrane-spanning segment; that stretch reads PGFLVFDTIVILAGNFVLDIL. The Cytoplasmic segment spans residues 286–315; the sequence is NVIWFSTMVSVAAKVLKKGESVDKVTKNEQ.

It localises to the endoplasmic reticulum membrane. This is an uncharacterized protein from Saccharomyces cerevisiae (strain ATCC 204508 / S288c) (Baker's yeast).